The following is a 910-amino-acid chain: Putative coatomer subunit beta'-3 (910 aa).

WD repeat units lie at residues 13–52 (QRSE…MVKS), 55–94 (VTEL…KVKV), 97–136 (AHTD…MCTQ), 140–180 (GHSH…PNFT), 183–224 (GHSK…CVQT), 227–266 (GHAH…LENT), 269–309 (YGLE…ASMD), 351–393 (TCDL…GSAL), and 461–501 (RIDV…SHLD). Positions 865–884 (ENGVEESQEDAVEVDVEADG) are enriched in acidic residues. Residues 865–910 (ENGVEESQEDAVEVDVEADGSTDGTVLVNGNDTEEQWGTNNEESLA) form a disordered region. A compositionally biased stretch (polar residues) spans 886–910 (TDGTVLVNGNDTEEQWGTNNEESLA).

It belongs to the WD repeat COPB2 family. In terms of assembly, oligomeric complex that consists of at least the alpha, beta, beta', gamma, delta, epsilon and zeta subunits.

It localises to the cytoplasm. The protein localises to the golgi apparatus membrane. The protein resides in the cytoplasmic vesicle. Its subcellular location is the COPI-coated vesicle membrane. In terms of biological role, the coatomer is a cytosolic protein complex that binds to dilysine motifs and reversibly associates with Golgi non-clathrin-coated vesicles, which further mediate biosynthetic protein transport from the ER, via the Golgi up to the trans Golgi network. Coatomer complex is required for budding from Golgi membranes, and is essential for the retrograde Golgi-to-ER transport of dilysine-tagged proteins. In Oryza sativa subsp. japonica (Rice), this protein is Putative coatomer subunit beta'-3.